The chain runs to 302 residues: Sulfate adenylyltransferase subunit 2 (302 aa).

Belongs to the PAPS reductase family. CysD subfamily. As to quaternary structure, heterodimer composed of CysD, the smaller subunit, and CysN.

It catalyses the reaction sulfate + ATP + H(+) = adenosine 5'-phosphosulfate + diphosphate. It participates in sulfur metabolism; hydrogen sulfide biosynthesis; sulfite from sulfate: step 1/3. With CysN forms the ATP sulfurylase (ATPS) that catalyzes the adenylation of sulfate producing adenosine 5'-phosphosulfate (APS) and diphosphate, the first enzymatic step in sulfur assimilation pathway. APS synthesis involves the formation of a high-energy phosphoric-sulfuric acid anhydride bond driven by GTP hydrolysis by CysN coupled to ATP hydrolysis by CysD. This Shewanella halifaxensis (strain HAW-EB4) protein is Sulfate adenylyltransferase subunit 2.